The chain runs to 50 residues: Large ribosomal subunit protein bL33A (50 aa).

The protein belongs to the bacterial ribosomal protein bL33 family.

The sequence is that of Large ribosomal subunit protein bL33A (rpmG1) from Mycoplasmopsis pulmonis (strain UAB CTIP) (Mycoplasma pulmonis).